Reading from the N-terminus, the 567-residue chain is Dihydrolipoyllysine-residue acetyltransferase component of pyruvate dehydrogenase complex (567 aa).

Lipoyl-binding domains lie at 2 to 75 (SKQI…LVLE) and 108 to 181 (IVEV…MRFE). An N6-lipoyllysine mark is found at Lys41 and Lys147. Positions 192–238 (SAPASTSAPQTAAPATTAQAPQAAAPDTTAQAPQAAAPDTTAQAAQS) are enriched in low complexity. Positions 192-249 (SAPASTSAPQTAAPATTAQAPQAAAPDTTAQAPQAAAPDTTAQAAQSNNNVSGLSQEQ) are disordered. The span at 239–249 (NNNVSGLSQEQ) shows a compositional bias: polar residues. The Peripheral subunit-binding (PSBD) domain occupies 258–295 (HATPVIRRLAREFGVNLDKVKGTGRKGRIVKEDIEAYV). Catalysis depends on residues Cys484, His540, and Asp544.

It belongs to the 2-oxoacid dehydrogenase family. Forms a 24-polypeptide structural core with octahedral symmetry. (R)-lipoate serves as cofactor.

It carries out the reaction N(6)-[(R)-dihydrolipoyl]-L-lysyl-[protein] + acetyl-CoA = N(6)-[(R)-S(8)-acetyldihydrolipoyl]-L-lysyl-[protein] + CoA. The pyruvate dehydrogenase complex catalyzes the overall conversion of pyruvate to acetyl-CoA and CO(2). It contains multiple copies of three enzymatic components: pyruvate dehydrogenase (E1), dihydrolipoamide acetyltransferase (E2) and lipoamide dehydrogenase (E3). This is Dihydrolipoyllysine-residue acetyltransferase component of pyruvate dehydrogenase complex (aceF) from Haemophilus influenzae (strain ATCC 51907 / DSM 11121 / KW20 / Rd).